A 398-amino-acid chain; its full sequence is S-adenosylmethionine decarboxylase proenzyme (398 aa).

Active-site residues include Glu18 and Glu21. Ser78 functions as the Schiff-base intermediate with substrate; via pyruvic acid in the catalytic mechanism. A Pyruvic acid (Ser); by autocatalysis modification is found at Ser78. Cys92 serves as the catalytic Proton donor; for catalytic activity. Catalysis depends on proton acceptor; for processing activity residues Ser243 and His256.

The protein belongs to the eukaryotic AdoMetDC family. It depends on pyruvate as a cofactor. Is synthesized initially as an inactive proenzyme. Formation of the active enzyme involves a self-maturation process in which the active site pyruvoyl group is generated from an internal serine residue via an autocatalytic post-translational modification. Two non-identical subunits are generated from the proenzyme in this reaction, and the pyruvate is formed at the N-terminus of the alpha chain, which is derived from the carboxyl end of the proenzyme. The post-translation cleavage follows an unusual pathway, termed non-hydrolytic serinolysis, in which the side chain hydroxyl group of the serine supplies its oxygen atom to form the C-terminus of the beta chain, while the remainder of the serine residue undergoes an oxidative deamination to produce ammonia and the pyruvoyl group blocking the N-terminus of the alpha chain.

It carries out the reaction S-adenosyl-L-methionine + H(+) = S-adenosyl 3-(methylsulfanyl)propylamine + CO2. It participates in amine and polyamine biosynthesis; S-adenosylmethioninamine biosynthesis; S-adenosylmethioninamine from S-adenosyl-L-methionine: step 1/1. The chain is S-adenosylmethionine decarboxylase proenzyme (SAMDC) from Oryza sativa subsp. indica (Rice).